We begin with the raw amino-acid sequence, 742 residues long: Eukaryotic translation initiation factor 3 subunit B (742 aa).

Residues 1 to 10 (MAPSFDTLSE) are compositionally biased toward polar residues. The disordered stretch occupies residues 1–20 (MAPSFDTLSEQDLHEEEEEE). Residues 40-126 (TFVVIDGLPI…HTLAVNKLMD (87 aa)) form the RRM domain. WD repeat units follow at residues 193–230 (AHWTQLFVQWSPKGTYLASVHPQGIQLWGGPAFSKLKQ), 232–290 (PHPF…RSFV), 304–345 (QPKK…LLGK), 515–558 (IEKK…EKPE), and 573–611 (VEHYGVTDVDWDPTGRYVVSSASVWTHSMENGWNLHTFA).

The protein belongs to the eIF-3 subunit B family. As to quaternary structure, component of the eukaryotic translation initiation factor 3 (eIF-3) complex.

It is found in the cytoplasm. Its function is as follows. RNA-binding component of the eukaryotic translation initiation factor 3 (eIF-3) complex, which is involved in protein synthesis of a specialized repertoire of mRNAs and, together with other initiation factors, stimulates binding of mRNA and methionyl-tRNAi to the 40S ribosome. The eIF-3 complex specifically targets and initiates translation of a subset of mRNAs involved in cell proliferation. This chain is Eukaryotic translation initiation factor 3 subunit B (prt1), found in Aspergillus terreus (strain NIH 2624 / FGSC A1156).